The primary structure comprises 139 residues: D-ribose pyranase (139 aa).

The active-site Proton donor is H20. Substrate is bound by residues D28, H106, and 128 to 130 (YAN).

It belongs to the RbsD / FucU family. RbsD subfamily. Homodecamer.

It localises to the cytoplasm. It catalyses the reaction beta-D-ribopyranose = beta-D-ribofuranose. It participates in carbohydrate metabolism; D-ribose degradation; D-ribose 5-phosphate from beta-D-ribopyranose: step 1/2. Functionally, catalyzes the interconversion of beta-pyran and beta-furan forms of D-ribose. This is D-ribose pyranase from Photorhabdus laumondii subsp. laumondii (strain DSM 15139 / CIP 105565 / TT01) (Photorhabdus luminescens subsp. laumondii).